We begin with the raw amino-acid sequence, 137 residues long: Large ribosomal subunit protein uL22 (137 aa).

The protein belongs to the universal ribosomal protein uL22 family. In terms of assembly, part of the 50S ribosomal subunit.

Functionally, this protein binds specifically to 23S rRNA; its binding is stimulated by other ribosomal proteins, e.g. L4, L17, and L20. It is important during the early stages of 50S assembly. It makes multiple contacts with different domains of the 23S rRNA in the assembled 50S subunit and ribosome. Its function is as follows. The globular domain of the protein is located near the polypeptide exit tunnel on the outside of the subunit, while an extended beta-hairpin is found that lines the wall of the exit tunnel in the center of the 70S ribosome. This Flavobacterium psychrophilum (strain ATCC 49511 / DSM 21280 / CIP 103535 / JIP02/86) protein is Large ribosomal subunit protein uL22.